The sequence spans 142 residues: MSEALSLFSLFASSFLSATLLPGNSEVVLVAMLLSGISHPWVLVLTATMGNSLGGLTNVILGRFFPLRKTSRWQEKATGWLKRYGAVTLLLSWMPVVGDLLCLLAGWMRISWGPVIFFLCLGKALRYVAVAAATVQGMMWWH.

Over 1–2 the chain is Cytoplasmic; that stretch reads MS. The chain crosses the membrane as a helical span at residues 3–23; it reads EALSLFSLFASSFLSATLLPG. Residues 24–26 are Periplasmic-facing; sequence NSE. Residues 27-47 form a helical membrane-spanning segment; sequence VVLVAMLLSGISHPWVLVLTA. The Cytoplasmic portion of the chain corresponds to 48-86; sequence TMGNSLGGLTNVILGRFFPLRKTSRWQEKATGWLKRYGA. A helical membrane pass occupies residues 87–107; that stretch reads VTLLLSWMPVVGDLLCLLAGW. At 108–142 the chain is on the periplasmic side; it reads MRISWGPVIFFLCLGKALRYVAVAAATVQGMMWWH.

To H.influenzae HI_0489.

It localises to the cell inner membrane. This Escherichia coli (strain K12) protein is Inner membrane protein YqaA (yqaA).